Consider the following 545-residue polypeptide: Capsular polysaccharide phosphotransferase SacB (545 aa).

Belongs to the stealth family.

Its function is as follows. Part of a capsular biosynthesis operon and has been suggested to be the polymerase that links individual UDP-N-acetyl-D-mannosamine monomers. In serotype A the capsule is composed of repeated units of (alpha 1-6)-linked N-acetyl-D-mannosamine-1-phosphate. Non-polar disruption of this open reading frame prevented capsule synthesis. The chain is Capsular polysaccharide phosphotransferase SacB (sacB) from Neisseria meningitidis serogroup A.